The primary structure comprises 286 residues: N-alpha-acetyltransferase 80 (286 aa).

Residues 33–54 (TFNPGPTELTLDPEHQPEETPA) form a disordered region. Residues 60 to 207 (LTLEPVHRRP…VFTSRRLPAT (148 aa)) enclose the N-acetyltransferase domain. Substrate contacts are provided by residues R85 and 90–93 (RLHS). Residues 141 to 143 (VVV), 149 to 154 (GRGFGR), and Q179 each bind acetyl-CoA. Residues 212-269 (FPTAPSPRPPRKAPNLTAQAAPRGPKGPPLPPPPPLPECLTISPPVPSGPPSKSLLET) are disordered. Residues 236-248 (PKGPPLPPPPPLP) show a composition bias toward pro residues.

The protein belongs to the acetyltransferase family. As to expression, strongly expressed in heart and skeletal muscle, followed by brain and pancreas, with weak expression in kidney, liver, and lung and no expression in placenta.

It is found in the cytoplasm. Its subcellular location is the cytosol. The enzyme catalyses N-terminal L-aspartyl-L-aspartyl-L-aspartyl-[protein] + acetyl-CoA = N-terminal N-acetyl-L-aspartyl-L-aspartyl-L-aspartyl-[protein] + CoA + H(+). It carries out the reaction N-terminal L-glutamyl-L-glutamyl-L-glutamyl-[protein] + acetyl-CoA = N-terminal N-acetyl-L-glutamyl-L-glutamyl-L-glutamyl-[protein] + CoA + H(+). Its function is as follows. N-alpha-acetyltransferase that specifically mediates the acetylation of the acidic amino terminus of processed forms of beta- and gamma-actin (ACTB and ACTG, respectively). N-terminal acetylation of processed beta- and gamma-actin regulates actin filament depolymerization and elongation. In vivo, preferentially displays N-terminal acetyltransferase activity towards acid N-terminal sequences starting with Asp-Asp-Asp and Glu-Glu-Glu. In vitro, shows high activity towards Met-Asp-Glu-Leu and Met-Asp-Asp-Asp. May act as a tumor suppressor. The sequence is that of N-alpha-acetyltransferase 80 from Homo sapiens (Human).